The primary structure comprises 309 residues: MIIVTGGAGLIGSNIIAALNDMGRRDILVVDNLTDGTKFVNLVDLDIADYCDKEDFIASIIAGDDFGDIDAIFHQGACSATTEWNGKYLMQNNYEYSKELLHYCLLREIPFFYASSAATYGDKTDFIEERQFEGPLNVYGYSKFLFDEYVRQILPQATSPVCGFKYFNVYGPREQHKGSMASVAFHLNNQMLKGENPKLFAGSEHFLRDFVYVGDVAKVNLWAWQHGISGIYNCGTGRAESFEQVARAVLNYHGKGEIETIPFPEHLKSRYQEYTQANLTKLRAAGYQAEFKSVAEGVAEYMQWLNRKS.

Residues 10-11, 31-32, Lys-38, Lys-53, 75-79, and Asn-92 contribute to the NADP(+) site; these read LI, DN, and QGACS. The active-site Proton acceptor is the Tyr-139. Lys-143 contacts NADP(+). Position 168 (Asn-168) interacts with substrate. Residues Val-169 and Lys-177 each contribute to the NADP(+) site. The Proton acceptor role is filled by Lys-177. Residues Ser-179, His-186, 200–203, Arg-208, and Tyr-271 contribute to the substrate site; that span reads FAGS.

This sequence belongs to the NAD(P)-dependent epimerase/dehydratase family. HldD subfamily. Homopentamer. Requires NADP(+) as cofactor.

It carries out the reaction ADP-D-glycero-beta-D-manno-heptose = ADP-L-glycero-beta-D-manno-heptose. The protein operates within nucleotide-sugar biosynthesis; ADP-L-glycero-beta-D-manno-heptose biosynthesis; ADP-L-glycero-beta-D-manno-heptose from D-glycero-beta-D-manno-heptose 7-phosphate: step 4/4. Functionally, catalyzes the interconversion between ADP-D-glycero-beta-D-manno-heptose and ADP-L-glycero-beta-D-manno-heptose via an epimerization at carbon 6 of the heptose. In Histophilus somni (strain 2336) (Haemophilus somnus), this protein is ADP-L-glycero-D-manno-heptose-6-epimerase.